Here is a 312-residue protein sequence, read N- to C-terminus: UDP-N-acetylenolpyruvoylglucosamine reductase (312 aa).

The region spanning 24-206 (GIGGPADLFA…SADILKVRNE (183 aa)) is the FAD-binding PCMH-type domain. Arginine 166 is a catalytic residue. Serine 217 (proton donor) is an active-site residue. The active site involves glutamate 307.

Belongs to the MurB family. FAD serves as cofactor.

Its subcellular location is the cytoplasm. It carries out the reaction UDP-N-acetyl-alpha-D-muramate + NADP(+) = UDP-N-acetyl-3-O-(1-carboxyvinyl)-alpha-D-glucosamine + NADPH + H(+). It functions in the pathway cell wall biogenesis; peptidoglycan biosynthesis. In terms of biological role, cell wall formation. This Solibacter usitatus (strain Ellin6076) protein is UDP-N-acetylenolpyruvoylglucosamine reductase.